A 729-amino-acid chain; its full sequence is Oligopeptide transporter 4 (729 aa).

Residue alanine 2 is modified to N-acetylalanine. Position 8 is a phosphoserine (serine 8). A run of 16 helical transmembrane segments spans residues 37-57, 61-81, 123-143, 148-168, 177-194, 207-227, 256-276, 279-299, 352-372, 410-430, 438-458, 522-542, 592-612, 621-637, 640-660, and 673-693; these read MWFLGLISCSLLSFLNQFFSY, PLVITQITVQVATLPIGHFLA, AFGSGSAYAVGIITIIKAFYG, FIAGWLLIITTQVLGYGWAGL, AHMWWPSTLVQVSLFRAL, FFVIALVCSFGWYIVPGYLFT, GLGAFTLDWTAVASFLFSPLI, FFAIANVFIGYVLLIYFVLPL, LSMFFALTYGLGFATIASTLT, WWFYSMLAATLLISLALCVFL, WWGLVFASAMAFVFTLPISII, FLVQFIGTILAGTINITVAWW, YAAMNWFFLGGALGPVIVWSL, WIPLVNLPVLLGATAMM, ATAVNYNSWILVGTIFNLFVF, and VLSAAMDAGVAFMAVLLYFSV.

The protein belongs to the oligopeptide OPT transporter (TC 2.A.67.1) family. Expressed in flowers, leaves, roots, and stems.

The protein resides in the membrane. In terms of biological role, involved in the translocation of tetra- and pentapeptides across the cellular membrane in an energy-dependent manner. This chain is Oligopeptide transporter 4 (OPT4), found in Arabidopsis thaliana (Mouse-ear cress).